We begin with the raw amino-acid sequence, 419 residues long: Metacaspase-1A (419 aa).

The tract at residues 1 to 89 is disordered; that stretch reads MHHQQSSYGG…PPDQPVSFGQ (89 aa). Positions 41 to 51 are enriched in polar residues; the sequence is NGYNSPQQNYG. The span at 59-71 shows a compositional bias: low complexity; sequence YQQQSAYQNSYNQ. Active-site residues include H190 and C246.

Belongs to the peptidase C14B family.

Functionally, involved in cell death (apoptosis). The protein is Metacaspase-1A (casA) of Aspergillus oryzae (strain ATCC 42149 / RIB 40) (Yellow koji mold).